The primary structure comprises 283 residues: Urease accessory protein UreD (283 aa).

Residues M1–G21 are disordered.

This sequence belongs to the UreD family. UreD, UreF and UreG form a complex that acts as a GTP-hydrolysis-dependent molecular chaperone, activating the urease apoprotein by helping to assemble the nickel containing metallocenter of UreC. The UreE protein probably delivers the nickel.

It is found in the cytoplasm. Probably acts in the maturation of urease via the functional incorporation of the urease nickel metallocenter. Required for urease expression. This is Urease accessory protein UreD from Corynebacterium glutamicum (strain ATCC 13032 / DSM 20300 / JCM 1318 / BCRC 11384 / CCUG 27702 / LMG 3730 / NBRC 12168 / NCIMB 10025 / NRRL B-2784 / 534).